The primary structure comprises 465 residues: A-type ATP synthase subunit B (465 aa).

Belongs to the ATPase alpha/beta chains family. In terms of assembly, the A-type ATPase is composed of subunits A(3), B(3), C, D, E(1 or 2), F, H(2), I and proteolipid K(x).

The protein resides in the cell membrane. Its function is as follows. Component of the A-type ATP synthase that produces ATP from ADP in the presence of a proton gradient across the membrane. The B chain is a regulatory subunit. This chain is A-type ATP synthase subunit B, found in Methanocaldococcus jannaschii (strain ATCC 43067 / DSM 2661 / JAL-1 / JCM 10045 / NBRC 100440) (Methanococcus jannaschii).